Here is a 524-residue protein sequence, read N- to C-terminus: DNA damage-binding protein CMR1 (524 aa).

Residues 35–79 are disordered; sequence EKIIPKPAPPKPKRASAPRAKREPVKRETARPTRQSSRLAGLDAD. The segment covering 54–65 has biased composition (basic and acidic residues); sequence AKREPVKRETAR. WD repeat units follow at residues 184–225, 245–285, 295–332, 336–376, 385–425, 447–490, and 493–524; these read LVPQ…VKAE, THSR…STEA, LPIS…STAE, LTDQ…GKGD, THDS…KWTA, GRWV…LAQL, and DGIT…CLWM.

Belongs to the WD repeat DDB2/WDR76 family.

Functionally, DNA-binding protein that binds to both single- and double-stranded DNA. Binds preferentially to UV-damaged DNA. May be involved in DNA-metabolic processes. This chain is DNA damage-binding protein CMR1, found in Chaetomium globosum (strain ATCC 6205 / CBS 148.51 / DSM 1962 / NBRC 6347 / NRRL 1970) (Soil fungus).